The primary structure comprises 447 residues: Asparagine--tRNA ligase (447 aa).

It belongs to the class-II aminoacyl-tRNA synthetase family. In terms of assembly, homodimer.

The protein resides in the cytoplasm. It carries out the reaction tRNA(Asn) + L-asparagine + ATP = L-asparaginyl-tRNA(Asn) + AMP + diphosphate + H(+). This is Asparagine--tRNA ligase from Streptococcus pneumoniae (strain ATCC BAA-255 / R6).